A 163-amino-acid polypeptide reads, in one-letter code: Protein-export protein SecB (163 aa).

Belongs to the SecB family. As to quaternary structure, homotetramer, a dimer of dimers. One homotetramer interacts with 1 SecA dimer.

Its subcellular location is the cytoplasm. One of the proteins required for the normal export of preproteins out of the cell cytoplasm. It is a molecular chaperone that binds to a subset of precursor proteins, maintaining them in a translocation-competent state. It also specifically binds to its receptor SecA. The sequence is that of Protein-export protein SecB from Methylibium petroleiphilum (strain ATCC BAA-1232 / LMG 22953 / PM1).